Reading from the N-terminus, the 2110-residue chain is Protein Ycf2 (2110 aa).

1336–1343 provides a ligand contact to ATP; it reads GSIGTGRS. The disordered stretch occupies residues 1852-1876; the sequence is EEEAELQDEEAELQDEGAGRKDEEA. Residues 1854–1866 show a composition bias toward acidic residues; the sequence is EAELQDEEAELQD.

This sequence belongs to the Ycf2 family.

The protein localises to the plastid. The protein resides in the chloroplast stroma. Its function is as follows. Probable ATPase of unknown function. Its presence in a non-photosynthetic plant (Epifagus virginiana) and experiments in tobacco indicate that it has an essential function which is probably not related to photosynthesis. This Pelargonium hortorum (Common geranium) protein is Protein Ycf2 (ycf2-A).